We begin with the raw amino-acid sequence, 197 residues long: MSPSSLDELIDALRGLPGVGPKSAQRMAYHLLQRDQRGAERLARALGNALAVLRHCERCNTFTETEICQRCASPQRDASLLCVVEMPADLAVIEQTHAYNGLYYVLMGRLSPLDGIGPRELKFDKLLARVADSTVQEVILATNFTNEGEATAHIVAELLAARGIRVSRLSRGVPVGGELEHTDTGTIAQALVERRPL.

Residues 56 to 71 form a C4-type zinc finger; it reads CERCNTFTETEICQRC. The Toprim domain maps to 79–174; it reads SLLCVVEMPA…RVSRLSRGVP (96 aa).

It belongs to the RecR family.

Functionally, may play a role in DNA repair. It seems to be involved in an RecBC-independent recombinational process of DNA repair. It may act with RecF and RecO. This Aromatoleum aromaticum (strain DSM 19018 / LMG 30748 / EbN1) (Azoarcus sp. (strain EbN1)) protein is Recombination protein RecR.